The primary structure comprises 205 residues: S-crystallin SL11 (205 aa).

Residues 2–80 (PSYTLYYFNG…YLAREFGFYG (79 aa)) form the GST N-terminal domain. The GST C-terminal domain maps to 82-205 (NNMDMFKVDC…YIKKRNNTAF (124 aa)).

The protein belongs to the GST superfamily. Lens.

In terms of biological role, S-crystallins are structural components of squids and octopi eye lens. Contains relatively little if any GST activity. The protein is S-crystallin SL11 of Nototodarus sloanii (Wellington flying squid).